A 324-amino-acid polypeptide reads, in one-letter code: Calmodulin-like protein 12 (324 aa).

6 EF-hand domains span residues 8-43 (DQITEYRESFRLFDKNGDGSITKKELGTMMRSIGEK), 44-79 (PTKADLQDLMNEADLDGDGTIDFPEFLCVMAKNQGH), 97-132 (DQITEYRESFRLFDKNGDGSITKKELRTVMFSLGKN), 133-168 (RTKADLQDMMNEVDLDGDGTIDFPEFLYLMAKNQGH), 187-222 (DQILEFREAFRVFDKNGDGYITVNELRTTMRSLGET), and 223-258 (QTKAELQDMINEADADGDGTISFSEFVCVMTGKMID). Ca(2+) is bound by residues Asp21, Asn23, Asp25, Ser27, Glu32, Asp57, Asp59, Asp61, Thr63, Glu68, Asp110, Asn112, Asp114, Ser116, Glu121, Asp146, Asp148, Asp150, Thr152, Glu157, Asp200, Asn202, Asp204, Tyr206, Glu211, Asp236, Asp238, Asp240, Thr242, and Glu247.

This sequence belongs to the calmodulin family. Interacts with PID. Binds to ABCG36.

Its function is as follows. Potential calcium sensor that binds calcium in vitro. This Arabidopsis thaliana (Mouse-ear cress) protein is Calmodulin-like protein 12.